Reading from the N-terminus, the 107-residue chain is Thiosulfate sulfurtransferase GlpE (107 aa).

Positions 17 to 101 (AAGAARLVDI…GFEAWRREFP (85 aa)) constitute a Rhodanese domain. Cys-65 functions as the Cysteine persulfide intermediate in the catalytic mechanism.

The protein belongs to the GlpE family.

It is found in the cytoplasm. The catalysed reaction is thiosulfate + hydrogen cyanide = thiocyanate + sulfite + 2 H(+). The enzyme catalyses thiosulfate + [thioredoxin]-dithiol = [thioredoxin]-disulfide + hydrogen sulfide + sulfite + 2 H(+). Functionally, transferase that catalyzes the transfer of sulfur from thiosulfate to thiophilic acceptors such as cyanide or dithiols. May function in a CysM-independent thiosulfate assimilation pathway by catalyzing the conversion of thiosulfate to sulfite, which can then be used for L-cysteine biosynthesis. The polypeptide is Thiosulfate sulfurtransferase GlpE (Aeromonas hydrophila subsp. hydrophila (strain ATCC 7966 / DSM 30187 / BCRC 13018 / CCUG 14551 / JCM 1027 / KCTC 2358 / NCIMB 9240 / NCTC 8049)).